We begin with the raw amino-acid sequence, 94 residues long: Pyrimidine/purine nucleoside phosphorylase (94 aa).

It belongs to the nucleoside phosphorylase PpnP family.

The catalysed reaction is a purine D-ribonucleoside + phosphate = a purine nucleobase + alpha-D-ribose 1-phosphate. It carries out the reaction adenosine + phosphate = alpha-D-ribose 1-phosphate + adenine. The enzyme catalyses cytidine + phosphate = cytosine + alpha-D-ribose 1-phosphate. It catalyses the reaction guanosine + phosphate = alpha-D-ribose 1-phosphate + guanine. The catalysed reaction is inosine + phosphate = alpha-D-ribose 1-phosphate + hypoxanthine. It carries out the reaction thymidine + phosphate = 2-deoxy-alpha-D-ribose 1-phosphate + thymine. The enzyme catalyses uridine + phosphate = alpha-D-ribose 1-phosphate + uracil. It catalyses the reaction xanthosine + phosphate = alpha-D-ribose 1-phosphate + xanthine. Functionally, catalyzes the phosphorolysis of diverse nucleosides, yielding D-ribose 1-phosphate and the respective free bases. Can use uridine, adenosine, guanosine, cytidine, thymidine, inosine and xanthosine as substrates. Also catalyzes the reverse reactions. The polypeptide is Pyrimidine/purine nucleoside phosphorylase (Salmonella agona (strain SL483)).